The sequence spans 209 residues: MIKEFCAENFTKIPQAIQKGANRIELCDNLAVGGTTPSTGVIEEVLAYAGEHSVPVMTIIRPRGGNFVYNDIELKIMHTDLIEAKKLGTDGIVIGCLTEDGWLDEEALDLFIETAEGLQITFHMAFDALSKENQFKAIDWLAERGVTRILTHGGPAGTPIEDNFDHLKELIVYADQRILILPGGGISTENVQTVMDTLKVTEVHGTKIV.

The protein belongs to the CutC family.

Its subcellular location is the cytoplasm. In terms of biological role, might participate in the control of copper homeostasis; data from other bacteria suggests it is not involved. The chain is PF03932 family protein CutC from Enterococcus faecalis (strain ATCC 700802 / V583).